The following is a 500-amino-acid chain: Glutamate--tRNA ligase (500 aa).

Residues 12–22 carry the 'HIGH' region motif; that stretch reads PSPTGHLHIGN. A 'KMSKS' region motif is present at residues 259–263; sequence KLSKR. Lys-262 provides a ligand contact to ATP.

This sequence belongs to the class-I aminoacyl-tRNA synthetase family. Glutamate--tRNA ligase type 1 subfamily. In terms of assembly, monomer.

The protein resides in the cytoplasm. The catalysed reaction is tRNA(Glu) + L-glutamate + ATP = L-glutamyl-tRNA(Glu) + AMP + diphosphate. Catalyzes the attachment of glutamate to tRNA(Glu) in a two-step reaction: glutamate is first activated by ATP to form Glu-AMP and then transferred to the acceptor end of tRNA(Glu). The polypeptide is Glutamate--tRNA ligase (Lactobacillus delbrueckii subsp. bulgaricus).